The chain runs to 372 residues: MAEKPLRPLAEGELSIDQVKEQLVELGKKRGVLTYAEITEKLAPYDQDSDQMDEFFEYLGEQGVEILNDNEEVPSLQQVEKEEEEFDLNDLSVPPGVKINDPVRMYLKEIGRVPLLTAEEEIELATRIEQGDEEAKRRLAEANLRLVVSIAKRYVGRGMLFLDLIQEGNMGLIKAVEKFDYNKGFKFSTYATWWIRQAITRAIADQARTIRIPVHMVETINKLIRVQRQLLQDLGREPSPEEVAEEMDLTPEKVREILKIAQEPVSLETPIGEEDDSHLGDFIEDQDALAPSDAAAYELLKEQLEDVLDTLTDREENVLRLRFGLDDGRTRTLEEVGKVFGVTRERIRQIEAKALRKLRHPSRSKRLKDFLE.

The tract at residues 139–209 (LAEANLRLVV…TRAIADQART (71 aa)) is sigma-70 factor domain-2. Residues 163–166 (DLIQ) carry the Interaction with polymerase core subunit RpoC motif. The interval 218 to 294 (ETINKLIRVQ…DQDALAPSDA (77 aa)) is sigma-70 factor domain-3. The sigma-70 factor domain-4 stretch occupies residues 307–360 (VLDTLTDREENVLRLRFGLDDGRTRTLEEVGKVFGVTRERIRQIEAKALRKLRH). Residues 333–352 (LEEVGKVFGVTRERIRQIEA) constitute a DNA-binding region (H-T-H motif).

Belongs to the sigma-70 factor family. RpoD/SigA subfamily. In terms of assembly, interacts transiently with the RNA polymerase catalytic core.

The protein localises to the cytoplasm. In terms of biological role, sigma factors are initiation factors that promote the attachment of RNA polymerase to specific initiation sites and are then released. This sigma factor is the primary sigma factor during exponential growth. This Halalkalibacterium halodurans (strain ATCC BAA-125 / DSM 18197 / FERM 7344 / JCM 9153 / C-125) (Bacillus halodurans) protein is RNA polymerase sigma factor SigA.